A 274-amino-acid polypeptide reads, in one-letter code: MPELPEVETVCRGLEKLIIGKKISSIEIRYPKMIKTDLEEFQRELPSQIIESMGRRGKYLLFYLTDKVLISHLRMEGKYFYYPDQGPERKHAHVFFHFEDGGTLVYEDVRKFGTMELLVPDLLDAYFISKKLGPEPSEQDFDLQVFQAALAKSKKPIKSHLLDQTLVAGLGNIYVDEVLWRAQVHPARPSQTLTAEEATAIHDQTIAVLGQAVEKGGSTIRTYTNAFGEDGSMQDFHQVYDKTGQECVRCGTIIEKIQLGGRGTHFCPNCQRRD.

The active-site Schiff-base intermediate with DNA is P2. E3 acts as the Proton donor in catalysis. Catalysis depends on K58, which acts as the Proton donor; for beta-elimination activity. Residues H91 and R110 each contribute to the DNA site. An FPG-type zinc finger spans residues 238–272; sequence QVYDKTGQECVRCGTIIEKIQLGGRGTHFCPNCQR. R262 serves as the catalytic Proton donor; for delta-elimination activity.

The protein belongs to the FPG family. As to quaternary structure, monomer. Zn(2+) is required as a cofactor.

It carries out the reaction Hydrolysis of DNA containing ring-opened 7-methylguanine residues, releasing 2,6-diamino-4-hydroxy-5-(N-methyl)formamidopyrimidine.. It catalyses the reaction 2'-deoxyribonucleotide-(2'-deoxyribose 5'-phosphate)-2'-deoxyribonucleotide-DNA = a 3'-end 2'-deoxyribonucleotide-(2,3-dehydro-2,3-deoxyribose 5'-phosphate)-DNA + a 5'-end 5'-phospho-2'-deoxyribonucleoside-DNA + H(+). In terms of biological role, involved in base excision repair of DNA damaged by oxidation or by mutagenic agents. Acts as a DNA glycosylase that recognizes and removes damaged bases. Has a preference for oxidized purines, such as 7,8-dihydro-8-oxoguanine (8-oxoG). Has AP (apurinic/apyrimidinic) lyase activity and introduces nicks in the DNA strand. Cleaves the DNA backbone by beta-delta elimination to generate a single-strand break at the site of the removed base with both 3'- and 5'-phosphates. This chain is Formamidopyrimidine-DNA glycosylase, found in Streptococcus pneumoniae (strain ATCC BAA-255 / R6).